A 197-amino-acid polypeptide reads, in one-letter code: EF-hand calcium-binding domain-containing protein 9 (197 aa).

Asp-58 and Asp-69 together coordinate Ca(2+). 3 EF-hand domains span residues 59 to 94 (LKKA…LLAH), 100 to 135 (GQFM…FLFN), and 136 to 171 (IQKQ…YTDK). Ca(2+) is bound by residues Asp-149, Asp-153, Arg-155, and Glu-160. The span at 177 to 188 (KTEEKEKGERKR) shows a compositional bias: basic and acidic residues. The interval 177 to 197 (KTEEKEKGERKRSLYSKCHIK) is disordered.

As to quaternary structure, component of the CatSper complex or CatSpermasome composed of the core pore-forming members CATSPER1, CATSPER2, CATSPER3 and CATSPER4 as well as auxiliary members CATSPERB, CATSPERG, CATSPERD, CATSPERE, CATSPERZ, C2CD6/CATSPERT, TMEM249, TMEM262 and EFCAB9. HSPA1 may be an additional auxiliary complex member. The core complex members CATSPER1, CATSPER2, CATSPER3 and CATSPER4 form a heterotetrameric channel. The auxiliary CATSPERB, CATSPERG, CATSPERD and CATSPERE subunits form a pavilion-like structure over the pore which stabilizes the complex through interactions with CATSPER4, CATSPER3, CATSPER1 and CATSPER2 respectively. TMEM262/CATSPERH interacts with CATSPERB, further stabilizing the complex. C2CD6/CATSPERT interacts at least with CATSPERD and is required for targeting the CatSper complex in the flagellar membrane. Interacts with CATSPERZ; the interaction is direct, Ca(2+)-dependent and connects EFCAB9 with the CatSper complex. Dissociates from CATSPERZ at elevated pH.

The protein resides in the cytoplasm. Its subcellular location is the cell projection. It is found in the cilium. The protein localises to the flagellum. In terms of biological role, auxiliary component of the CatSper complex, a complex involved in sperm cell hyperactivation. pH-dependent Ca(2+) sensor required to activate the CatSper channel. Sperm cell hyperactivation is needed for sperm motility which is essential late in the preparation of sperm for fertilization. Associates with the CatSper complex via direct interaction with CATSPERZ, and senses intracellular Ca(2+). Together with CATSPERZ, associates with the CatSper channel pore and is required for the two-row structure of each single CatSper channel. In Homo sapiens (Human), this protein is EF-hand calcium-binding domain-containing protein 9.